The sequence spans 127 residues: UPF0325 protein ASA_3165 (127 aa).

This sequence belongs to the UPF0325 family.

The sequence is that of UPF0325 protein ASA_3165 from Aeromonas salmonicida (strain A449).